A 173-amino-acid chain; its full sequence is Myosin light chain 5 (173 aa).

The tract at residues 1 to 22 (MASRKTKKKEGGGLRAQRASSN) is disordered. EF-hand domains are found at residues 30-65 (TQIQ…LGKT), 100-135 (DAEE…QADK), and 136-171 (MTAE…GEEK). Ca(2+) is bound by residues Asp-43, Asn-45, Asp-47, and Asp-54.

As to quaternary structure, myosin is a hexamer of 2 heavy chains and 4 light chains. As to expression, jaw-closing muscles.

This Felis catus (Cat) protein is Myosin light chain 5 (MYL5).